Here is a 190-residue protein sequence, read N- to C-terminus: Potassium-transporting ATPase KdpC subunit (190 aa).

Residues 10–30 (TFLFLLLITGGVYPLLTTALG) form a helical membrane-spanning segment.

The protein belongs to the KdpC family. The system is composed of three essential subunits: KdpA, KdpB and KdpC.

The protein localises to the cell inner membrane. Part of the high-affinity ATP-driven potassium transport (or Kdp) system, which catalyzes the hydrolysis of ATP coupled with the electrogenic transport of potassium into the cytoplasm. This subunit acts as a catalytic chaperone that increases the ATP-binding affinity of the ATP-hydrolyzing subunit KdpB by the formation of a transient KdpB/KdpC/ATP ternary complex. The chain is Potassium-transporting ATPase KdpC subunit from Escherichia coli O81 (strain ED1a).